Consider the following 692-residue polypeptide: Protein artemis (692 aa).

Thr380 bears the Phosphothreonine mark. Ser385 is subject to Phosphoserine. Disordered regions lie at residues 503–555 and 640–660; these read RLEN…DSQS and STNA…PEAE. Polar residues predominate over residues 507-520; that stretch reads FPSSTEAGGSQSPK. Positions 530–543 are enriched in low complexity; sequence THISSQNSSQSTHI. Polar residues-rich tracts occupy residues 544-555 and 640-650; these read TEQGSQGWDSQS and STNADSQSSSD. Ser645 bears the Phosphoserine; by ATM mark.

It belongs to the DNA repair metallo-beta-lactamase (DRMBL) family. As to quaternary structure, interacts with LIG4; the interaction is direct. Interacts with ATM. Interacts with BRCA1. Interacts with PRKDC. Interacts with TP53BP1. Also exhibits ATM- and phosphorylation-dependent interaction with the MRN complex, composed of MRE11, RAD50, and NBN. In terms of processing, phosphorylation on undefined residues by PRKDC may stimulate endonucleolytic activity on 5' and 3' hairpins and overhangs. PRKDC must remain present, even after phosphorylation, for efficient hairpin opening. Also phosphorylated by ATM in response to ionizing radiation (IR) and by ATR in response to ultraviolet (UV) radiation.

Its subcellular location is the nucleus. Functionally, required for V(D)J recombination, the process by which exons encoding the antigen-binding domains of immunoglobulins and T-cell receptor proteins are assembled from individual V, (D), and J gene segments. V(D)J recombination is initiated by the lymphoid specific RAG endonuclease complex, which generates site specific DNA double strand breaks (DSBs). These DSBs present two types of DNA end structures: hairpin sealed coding ends and phosphorylated blunt signal ends. These ends are independently repaired by the non homologous end joining (NHEJ) pathway to form coding and signal joints respectively. This protein exhibits single-strand specific 5'-3' exonuclease activity in isolation, and acquires endonucleolytic activity on 5' and 3' hairpins and overhangs when in a complex with PRKDC. The latter activity is required specifically for the resolution of closed hairpins prior to the formation of the coding joint. May also be required for the repair of complex DSBs induced by ionizing radiation, which require substantial end-processing prior to religation by NHEJ. This chain is Protein artemis (DCLRE1C), found in Pongo abelii (Sumatran orangutan).